Consider the following 595-residue polypeptide: Proline--tRNA ligase (595 aa).

Residues 1-22 (MKMSTMFGATLHTAPGRSESEG) are disordered.

Belongs to the class-II aminoacyl-tRNA synthetase family. ProS type 1 subfamily. In terms of assembly, homodimer.

Its subcellular location is the cytoplasm. The enzyme catalyses tRNA(Pro) + L-proline + ATP = L-prolyl-tRNA(Pro) + AMP + diphosphate. Catalyzes the attachment of proline to tRNA(Pro) in a two-step reaction: proline is first activated by ATP to form Pro-AMP and then transferred to the acceptor end of tRNA(Pro). As ProRS can inadvertently accommodate and process non-cognate amino acids such as alanine and cysteine, to avoid such errors it has two additional distinct editing activities against alanine. One activity is designated as 'pretransfer' editing and involves the tRNA(Pro)-independent hydrolysis of activated Ala-AMP. The other activity is designated 'posttransfer' editing and involves deacylation of mischarged Ala-tRNA(Pro). The misacylated Cys-tRNA(Pro) is not edited by ProRS. The chain is Proline--tRNA ligase from Salinispora tropica (strain ATCC BAA-916 / DSM 44818 / JCM 13857 / NBRC 105044 / CNB-440).